We begin with the raw amino-acid sequence, 105 residues long: Large ribosomal subunit protein uL18c (105 aa).

It belongs to the universal ribosomal protein uL18 family. In terms of assembly, part of the 50S ribosomal subunit; contacts the 5S rRNA.

It localises to the plastid. Its subcellular location is the chloroplast. In terms of biological role, binds 5S rRNA, forms part of the central protuberance of the 50S subunit. The polypeptide is Large ribosomal subunit protein uL18c (rpl18) (Cyanidium caldarium (Red alga)).